We begin with the raw amino-acid sequence, 491 residues long: mRNA cleavage and polyadenylation factor clp1 (491 aa).

ATP is bound by residues Glu28 and Lys78. Positions 128 to 160 (RAAAAQAQQQHPTHHQQQQQGRGAGAGVARSKP) are disordered. The segment covering 130 to 148 (AAAQAQQQHPTHHQQQQQG) has biased composition (low complexity). 171–176 (GVGKTS) lines the ATP pocket.

Belongs to the Clp1 family. Clp1 subfamily. Component of a pre-mRNA cleavage factor complex. Interacts directly with PCF11.

Its subcellular location is the nucleus. Functionally, required for endonucleolytic cleavage during polyadenylation-dependent pre-mRNA 3'-end formation. This Neurospora crassa (strain ATCC 24698 / 74-OR23-1A / CBS 708.71 / DSM 1257 / FGSC 987) protein is mRNA cleavage and polyadenylation factor clp1 (paa-7).